Consider the following 193-residue polypeptide: Imidazoleglycerol-phosphate dehydratase (193 aa).

The protein belongs to the imidazoleglycerol-phosphate dehydratase family.

The protein resides in the cytoplasm. The enzyme catalyses D-erythro-1-(imidazol-4-yl)glycerol 3-phosphate = 3-(imidazol-4-yl)-2-oxopropyl phosphate + H2O. Its pathway is amino-acid biosynthesis; L-histidine biosynthesis; L-histidine from 5-phospho-alpha-D-ribose 1-diphosphate: step 6/9. This chain is Imidazoleglycerol-phosphate dehydratase, found in Saccharolobus islandicus (strain Y.N.15.51 / Yellowstone #2) (Sulfolobus islandicus).